A 175-amino-acid chain; its full sequence is ATP synthase subunit b (175 aa).

A helical membrane pass occupies residues 19–39 (LVVGTIAFALLVFVLLKFVMP).

This sequence belongs to the ATPase B chain family. In terms of assembly, F-type ATPases have 2 components, F(1) - the catalytic core - and F(0) - the membrane proton channel. F(1) has five subunits: alpha(3), beta(3), gamma(1), delta(1), epsilon(1). F(0) has three main subunits: a(1), b(2) and c(10-14). The alpha and beta chains form an alternating ring which encloses part of the gamma chain. F(1) is attached to F(0) by a central stalk formed by the gamma and epsilon chains, while a peripheral stalk is formed by the delta and b chains.

It localises to the cell membrane. Functionally, f(1)F(0) ATP synthase produces ATP from ADP in the presence of a proton or sodium gradient. F-type ATPases consist of two structural domains, F(1) containing the extramembraneous catalytic core and F(0) containing the membrane proton channel, linked together by a central stalk and a peripheral stalk. During catalysis, ATP synthesis in the catalytic domain of F(1) is coupled via a rotary mechanism of the central stalk subunits to proton translocation. Component of the F(0) channel, it forms part of the peripheral stalk, linking F(1) to F(0). The protein is ATP synthase subunit b of Salinispora tropica (strain ATCC BAA-916 / DSM 44818 / JCM 13857 / NBRC 105044 / CNB-440).